The chain runs to 257 residues: Anamorsin homolog (257 aa).

Residues 1 to 132 (MSVLALDVAR…ARGTAFALKS (132 aa)) are N-terminal SAM-like domain. Positions 133-171 (RAVRVNATAADAADAWGASAAADDDELIDESALLTELDV) are linker. [2Fe-2S] cluster-binding residues include cysteine 181, cysteine 190, cysteine 193, and cysteine 195. A fe-S binding site A region spans residues 181-195 (CDVGAGKKACKNCTC). [4Fe-4S] cluster-binding residues include cysteine 219, cysteine 222, cysteine 230, and cysteine 233. Short sequence motifs (cx2C motif) lie at residues 219–222 (CGNC) and 230–233 (CAGC). The fe-S binding site B stretch occupies residues 219–233 (CGNCALGDAFRCAGC).

It belongs to the anamorsin family. Monomer. [2Fe-2S] cluster serves as cofactor. The cofactor is [4Fe-4S] cluster.

It is found in the cytoplasm. The protein localises to the mitochondrion intermembrane space. Functionally, component of the cytosolic iron-sulfur (Fe-S) protein assembly (CIA) machinery. Required for the maturation of extramitochondrial Fe-S proteins. Part of an electron transfer chain functioning in an early step of cytosolic Fe-S biogenesis, facilitating the de novo assembly of a [4Fe-4S] cluster on the cytosolic Fe-S scaffold complex. Electrons are transferred from NADPH via a FAD- and FMN-containing diflavin oxidoreductase. Together with the diflavin oxidoreductase, also required for the assembly of the diferric tyrosyl radical cofactor of ribonucleotide reductase (RNR), probably by providing electrons for reduction during radical cofactor maturation in the catalytic small subunit. The protein is Anamorsin homolog of Ostreococcus lucimarinus (strain CCE9901).